Consider the following 295-residue polypeptide: Deoxyuridine 5'-triphosphate nucleotidohydrolase (295 aa).

Residue 178–180 participates in substrate binding; the sequence is RSG. Residues 260-272 show a composition bias toward basic and acidic residues; it reads NSVRKHTHEDNPV. The tract at residues 260-295 is disordered; the sequence is NSVRKHTHEDNPVHEPNVATASADIRGTKGLGSSGF.

The protein belongs to the dUTPase family. Mg(2+) serves as cofactor.

The enzyme catalyses dUTP + H2O = dUMP + diphosphate + H(+). Functionally, involved in nucleotide metabolism: produces dUMP, the immediate precursor of thymidine nucleotides and decreases the intracellular concentration of dUTP to avoid uracil incorporation into viral DNA. This Human herpesvirus 8 type P (isolate GK18) (HHV-8) protein is Deoxyuridine 5'-triphosphate nucleotidohydrolase.